The chain runs to 392 residues: Methylthioribose-1-phosphate isomerase (392 aa).

The active-site Proton donor is Asp-267.

The protein belongs to the eIF-2B alpha/beta/delta subunits family. MtnA subfamily.

It is found in the cytoplasm. The protein resides in the nucleus. The catalysed reaction is 5-(methylsulfanyl)-alpha-D-ribose 1-phosphate = 5-(methylsulfanyl)-D-ribulose 1-phosphate. Its pathway is amino-acid biosynthesis; L-methionine biosynthesis via salvage pathway; L-methionine from S-methyl-5-thio-alpha-D-ribose 1-phosphate: step 1/6. Functionally, catalyzes the interconversion of methylthioribose-1-phosphate (MTR-1-P) into methylthioribulose-1-phosphate (MTRu-1-P). This chain is Methylthioribose-1-phosphate isomerase, found in Ajellomyces dermatitidis (strain ER-3 / ATCC MYA-2586) (Blastomyces dermatitidis).